Reading from the N-terminus, the 503-residue chain is Cytochrome P450 11B1, mitochondrial (503 aa).

Residues M1–L24 constitute a mitochondrion transit peptide. C450 is a binding site for heme.

This sequence belongs to the cytochrome P450 family. The cofactor is heme.

It is found in the mitochondrion inner membrane. The enzyme catalyses a steroid + 2 reduced [adrenodoxin] + O2 + 2 H(+) = an 11beta-hydroxysteroid + 2 oxidized [adrenodoxin] + H2O. It catalyses the reaction 11-deoxycortisol + 2 reduced [adrenodoxin] + O2 + 2 H(+) = cortisol + 2 oxidized [adrenodoxin] + H2O. The catalysed reaction is 21-hydroxyprogesterone + 2 reduced [adrenodoxin] + O2 + 2 H(+) = corticosterone + 2 oxidized [adrenodoxin] + H2O. It carries out the reaction corticosterone + 2 reduced [adrenodoxin] + O2 + 2 H(+) = 18-hydroxycorticosterone + 2 oxidized [adrenodoxin] + H2O. The enzyme catalyses 18-hydroxycorticosterone + 2 reduced [adrenodoxin] + O2 + 2 H(+) = aldosterone + 2 oxidized [adrenodoxin] + 2 H2O. It catalyses the reaction 21-hydroxyprogesterone + 2 reduced [adrenodoxin] + O2 + 2 H(+) = 19-hydroxy-11-deoxycorticosterone + 2 oxidized [adrenodoxin] + H2O. The catalysed reaction is 19-hydroxy-11-deoxycorticosterone + 2 reduced [adrenodoxin] + O2 + 2 H(+) = 19-oxo-11-deoxycorticosterone + 2 oxidized [adrenodoxin] + 2 H2O. Its pathway is steroid biosynthesis; glucocorticoid biosynthesis. It participates in steroid hormone biosynthesis. Its function is as follows. A cytochrome P450 monooxygenase that catalyzes the biosynthesis of aldosterone and other adrenal corticoids. Differing from other species (such as human, rat and mice), it is able to catalyze three sequential oxidative reactions of 11-deoxycorticosterone (21-hydroxyprogesterone), namely 11-beta hydroxylation, followed by two successive oxidations at C18 yielding 18-hydroxy and then 18-oxo intermediates, and ending with the formation of aldosterone. Steroid 11beta, 18- and 19-hydroxylase. Mechanistically, uses molecular oxygen inserting one oxygen atom into a substrate and reducing the second into a water molecule. Two electrons are provided by NADPH via a two-protein mitochondrial transfer system comprising flavoprotein FDXR (adrenodoxin/ferredoxin reductase) and nonheme iron-sulfur protein FDX1 or FDX2 (adrenodoxin/ferredoxin). The chain is Cytochrome P450 11B1, mitochondrial (CYP11B1) from Sus scrofa (Pig).